The chain runs to 405 residues: Polyketide biosynthesis cytochrome P450 PksS (405 aa).

The chain crosses the membrane as a helical span at residues 231–251 (LYSMLFLLVVAGLETTVNLLG). Cys352 is a binding site for heme.

Belongs to the cytochrome P450 family.

The protein localises to the cell membrane. It functions in the pathway antibiotic biosynthesis; bacillaene biosynthesis. Involved in the metabolism of the antibiotic polyketide bacillaene which is involved in secondary metabolism. The substrate is dihydrobacillaene. This is Polyketide biosynthesis cytochrome P450 PksS (pksS) from Bacillus subtilis (strain 168).